Reading from the N-terminus, the 689-residue chain is Glycine--tRNA ligase beta subunit (689 aa).

This sequence belongs to the class-II aminoacyl-tRNA synthetase family. In terms of assembly, tetramer of two alpha and two beta subunits.

Its subcellular location is the cytoplasm. The catalysed reaction is tRNA(Gly) + glycine + ATP = glycyl-tRNA(Gly) + AMP + diphosphate. The chain is Glycine--tRNA ligase beta subunit from Shigella boydii serotype 4 (strain Sb227).